Reading from the N-terminus, the 302-residue chain is CRISPR-associated endonuclease Cas1 1 (302 aa).

The Mn(2+) site is built by Glu-159, His-219, and Glu-234.

It belongs to the CRISPR-associated endonuclease Cas1 family. In terms of assembly, homodimer, forms a heterotetramer with a Cas2 homodimer. Requires Mg(2+) as cofactor. Mn(2+) serves as cofactor.

CRISPR (clustered regularly interspaced short palindromic repeat), is an adaptive immune system that provides protection against mobile genetic elements (viruses, transposable elements and conjugative plasmids). CRISPR clusters contain spacers, sequences complementary to antecedent mobile elements, and target invading nucleic acids. CRISPR clusters are transcribed and processed into CRISPR RNA (crRNA). Acts as a dsDNA endonuclease. Involved in the integration of spacer DNA into the CRISPR cassette. The polypeptide is CRISPR-associated endonuclease Cas1 1 (Pyrobaculum aerophilum (strain ATCC 51768 / DSM 7523 / JCM 9630 / CIP 104966 / NBRC 100827 / IM2)).